Here is a 139-residue protein sequence, read N- to C-terminus: Serpin-like protein HMSD (139 aa).

A signal peptide spans methionine 1–alanine 20. Residue asparagine 50 is glycosylated (N-linked (GlcNAc...) asparagine).

The protein belongs to the serpin family. Highly expressed in dendritic cells and primary leukemia cells, especially those of myeloid lineage.

It localises to the secreted. Functionally, putative serine protease inhibitor. This chain is Serpin-like protein HMSD (HMSD), found in Homo sapiens (Human).